The primary structure comprises 465 residues: Argininosuccinate lyase (465 aa).

The protein belongs to the lyase 1 family. Argininosuccinate lyase subfamily.

It localises to the cytoplasm. The enzyme catalyses 2-(N(omega)-L-arginino)succinate = fumarate + L-arginine. Its pathway is amino-acid biosynthesis; L-arginine biosynthesis; L-arginine from L-ornithine and carbamoyl phosphate: step 3/3. The polypeptide is Argininosuccinate lyase (Rhodopseudomonas palustris (strain ATCC BAA-98 / CGA009)).